The sequence spans 225 residues: Class E basic helix-loop-helix protein 23 (225 aa).

The disordered stretch occupies residues 35–104; it reads EAARGYGTPG…PREQRSLRLS (70 aa). Residues 100–154 enclose the bHLH domain; sequence SLRLSINARERRRMHDLNDALDGLRAVIPYAHSPSVRKLSKIATLLLAKNYILMQ.

Its subcellular location is the nucleus. Its function is as follows. May function as transcriptional repressor. May modulate the expression of genes required for the differentiation and/or maintenance of pancreatic and neuronal cell types. May be important for rod bipolar cell maturation. This Homo sapiens (Human) protein is Class E basic helix-loop-helix protein 23 (BHLHE23).